Reading from the N-terminus, the 272-residue chain is Dermonecrotic toxin LvSicTox-alphaIC1bi (272 aa).

His5 is a catalytic residue. 2 residues coordinate Mg(2+): Glu25 and Asp27. His41 serves as the catalytic Nucleophile. 2 disulfide bridges follow: Cys45–Cys51 and Cys47–Cys189. Asp84 serves as a coordination point for Mg(2+).

The protein belongs to the arthropod phospholipase D family. Class II subfamily. Requires Mg(2+) as cofactor. As to expression, expressed by the venom gland.

It localises to the secreted. It catalyses the reaction an N-(acyl)-sphingosylphosphocholine = an N-(acyl)-sphingosyl-1,3-cyclic phosphate + choline. The enzyme catalyses an N-(acyl)-sphingosylphosphoethanolamine = an N-(acyl)-sphingosyl-1,3-cyclic phosphate + ethanolamine. The catalysed reaction is a 1-acyl-sn-glycero-3-phosphocholine = a 1-acyl-sn-glycero-2,3-cyclic phosphate + choline. It carries out the reaction a 1-acyl-sn-glycero-3-phosphoethanolamine = a 1-acyl-sn-glycero-2,3-cyclic phosphate + ethanolamine. Functionally, dermonecrotic toxins cleave the phosphodiester linkage between the phosphate and headgroup of certain phospholipids (sphingolipid and lysolipid substrates), forming an alcohol (often choline) and a cyclic phosphate. This toxin acts on sphingomyelin (SM). It may also act on ceramide phosphoethanolamine (CPE), lysophosphatidylcholine (LPC) and lysophosphatidylethanolamine (LPE), but not on lysophosphatidylserine (LPS), and lysophosphatidylglycerol (LPG). It acts by transphosphatidylation, releasing exclusively cyclic phosphate products as second products. Induces dermonecrosis, hemolysis, increased vascular permeability, edema, inflammatory response, and platelet aggregation. This is Dermonecrotic toxin LvSicTox-alphaIC1bi from Loxosceles variegata (Recluse spider).